We begin with the raw amino-acid sequence, 293 residues long: Probable 2-(5''-triphosphoribosyl)-3'-dephosphocoenzyme-A synthase (293 aa).

It belongs to the CitG/MdcB family.

It catalyses the reaction 3'-dephospho-CoA + ATP = 2'-(5''-triphospho-alpha-D-ribosyl)-3'-dephospho-CoA + adenine. Functionally, involved in the formation of 2-(5''-phosphoribosyl)-3'-dephosphocoenzyme-A, the prosthetic group of the acyl-carrier protein of the malonate decarboxylase. The chain is Probable 2-(5''-triphosphoribosyl)-3'-dephosphocoenzyme-A synthase from Pseudomonas paraeruginosa (strain DSM 24068 / PA7) (Pseudomonas aeruginosa (strain PA7)).